The chain runs to 486 residues: Cardiolipin synthase A (486 aa).

The next 2 membrane-spanning stretches (helical) occupy residues 3-23 (TFYT…IAGV) and 38-58 (MAWL…YLSF). PLD phosphodiesterase domains are found at residues 219–246 (MDLR…VDPR) and 399–426 (EDGL…DMRS). Active-site residues include histidine 224, lysine 226, aspartate 231, histidine 404, lysine 406, and aspartate 411.

This sequence belongs to the phospholipase D family. Cardiolipin synthase subfamily. ClsA sub-subfamily.

It is found in the cell inner membrane. It carries out the reaction 2 a 1,2-diacyl-sn-glycero-3-phospho-(1'-sn-glycerol) = a cardiolipin + glycerol. In terms of biological role, catalyzes the reversible phosphatidyl group transfer from one phosphatidylglycerol molecule to another to form cardiolipin (CL) (diphosphatidylglycerol) and glycerol. The sequence is that of Cardiolipin synthase A from Serratia proteamaculans (strain 568).